The following is a 241-amino-acid chain: Viral CASP8 and FADD-like apoptosis regulator (241 aa).

2 DED domains span residues P8–G78 and R95–E175. The interval C212 to T241 is disordered. The segment covering V229–T241 has biased composition (polar residues).

Associates with the death-inducing signaling complex (DISC) formed by TNFRSF6/FAS, FADD and CASP8. Interacts with FADD. Interacts with host TRAF2. Interacts with host NEMO/IKBKG (via N-terminus). Interacts with host SH3BP4; this interaction plays an important in the suppression of host autophagy.

It is found in the host cytoplasm. The protein resides in the host nucleus. In terms of biological role, inhibits TNFRSF1A, TNFRSF6/FAS and TNFRSF12 induced apoptosis. Directs the degradation of host NFKBIB but not NFKBIA. Also suppresses host NF-kappa-B activation by interacting with and preventing ubiquitination of host NEMO/IKBKG, the NF-kappa-B essential modulator subunit of the IKK complex. Interferes with host CASP8/caspase-8 recruitment and activation at the death-inducing signaling complex (DISC). May lead to higher virus production and contribute to virus persistence and oncogenicity. Also participates in the inhibition of host autophagy by interacting with host SH3BP4. The chain is Viral CASP8 and FADD-like apoptosis regulator from Homo sapiens (Human).